The following is a 597-amino-acid chain: Aspartate--tRNA(Asp/Asn) ligase (597 aa).

Glutamate 182 is a binding site for L-aspartate. The segment at 206–209 (QLFK) is aspartate. Residue arginine 228 participates in L-aspartate binding. ATP-binding positions include 228-230 (RDE) and glutamine 237. Histidine 456 is a binding site for L-aspartate. Glutamate 490 is a binding site for ATP. Arginine 497 is a binding site for L-aspartate. Residue 542–545 (GFDR) participates in ATP binding.

It belongs to the class-II aminoacyl-tRNA synthetase family. Type 1 subfamily. Homodimer.

Its subcellular location is the cytoplasm. It catalyses the reaction tRNA(Asx) + L-aspartate + ATP = L-aspartyl-tRNA(Asx) + AMP + diphosphate. Aspartyl-tRNA synthetase with relaxed tRNA specificity since it is able to aspartylate not only its cognate tRNA(Asp) but also tRNA(Asn). Reaction proceeds in two steps: L-aspartate is first activated by ATP to form Asp-AMP and then transferred to the acceptor end of tRNA(Asp/Asn). This is Aspartate--tRNA(Asp/Asn) ligase from Desulfatibacillum aliphaticivorans.